We begin with the raw amino-acid sequence, 426 residues long: Glucose-6-phosphate isomerase (426 aa).

The active-site Proton donor is Glu282. Residues His303 and Lys417 contribute to the active site.

The protein belongs to the GPI family.

The protein resides in the cytoplasm. The catalysed reaction is alpha-D-glucose 6-phosphate = beta-D-fructose 6-phosphate. It participates in carbohydrate biosynthesis; gluconeogenesis. It functions in the pathway carbohydrate degradation; glycolysis; D-glyceraldehyde 3-phosphate and glycerone phosphate from D-glucose: step 2/4. Its function is as follows. Catalyzes the reversible isomerization of glucose-6-phosphate to fructose-6-phosphate. This is Glucose-6-phosphate isomerase from Onion yellows phytoplasma (strain OY-M).